The sequence spans 445 residues: CBL-interacting serine/threonine-protein kinase 5 (445 aa).

A Protein kinase domain is found at 12-267 (YEMGRLLGKG…IPAIMRTPWL (256 aa)). ATP-binding positions include 18-26 (LGKGTFAKV) and K41. D135 functions as the Proton acceptor in the catalytic mechanism. The segment at 153 to 182 (DFGLSALPEQILQDGLLHTQCGTPAYVAPE) is activation loop. S157 carries the phosphoserine modification. Position 171 is a phosphothreonine (T171). Residues 307–332 (ISPKFFNAFEFISSMSSGFDLSSLFE) enclose the NAF domain. Residues 336–366 (KVQSVFTSRSSATEVMEKIETVTKEMNMKVK) form a PPI region.

The protein belongs to the protein kinase superfamily. CAMK Ser/Thr protein kinase family. SNF1 subfamily. It depends on Mn(2+) as a cofactor.

It catalyses the reaction L-seryl-[protein] + ATP = O-phospho-L-seryl-[protein] + ADP + H(+). The enzyme catalyses L-threonyl-[protein] + ATP = O-phospho-L-threonyl-[protein] + ADP + H(+). CIPK serine-threonine protein kinases interact with CBL proteins. Binding of a CBL protein to the regulatory NAF domain of CIPK protein lead to the activation of the kinase in a calcium-dependent manner. In Arabidopsis thaliana (Mouse-ear cress), this protein is CBL-interacting serine/threonine-protein kinase 5 (CIPK5).